The primary structure comprises 87 residues: Putative regulatory protein GK1166 (87 aa).

The protein belongs to the RemA family.

This chain is Putative regulatory protein GK1166, found in Geobacillus kaustophilus (strain HTA426).